The sequence spans 782 residues: MKFIKRKTKLLTITIGAVAVSSILLGGIFYGTSQKSPSSFGIASIDQKENFINKDNLDYQKARPSIKDSNLKEIPKPKPQPKPKPQPTPFPDPIPTPPKKEELKKPDIKPEEPKKPEIKPEPKPEPIPQPAPPIETKPKEELLPPNPPPPKEEPKPEPNPQPQPQQVPNNSNSRIIEINGVRVEAEVEVPPPRDIAEYDKQNNLVNPNPYINDSVGKIKNVKVTDELRKATGKLVQGNLGRWDYKHLINDLLTLKPEEIEKYVKNDKSGYYAKVWYRFSRLFESENVVNFLTEQGKKEYPEMKSKFVSKDHKYAWLYQHLDLTKFTQLSNESESYLKEGYTPDPDNAYVDENGKISSHAYSPAKGYNSVTSRMENDNWNRRVFGYKSWYGRTPGNLVEGNYPGWKKTNVTQEFHQYGVSDGDGITVNKLTREKTEDGRLNEGYVIDIDADNPQGYEKTKKLIQTLKEKNINITGYRIHNMGKSDSSQKFVDILKTLPNQLPLLELFFSAGSHNTSSLIALKDKKIKELGLFTLGNSLLDEWSINPNALRNVEWINSNDYNVSFNYKQGADIATRITFDTLAFDESDYNDNASDIKSKLKQINDGLRMVYWTRNNEPIFQGSFGPGLDPDHKESGNSYPQGLDFSRVPQIRSLRGLIFKDEQKTSNNKDRKLRRINFYNNSTTYKMSIEDLNEAGFNEHIVSGEPGEKSKITFSNGSGTTKIQIDGDQELSANGISNLSAMFNFAESLQRTIVVNNTNSPLANQLRNAGYSVESTTNAGLIDI.

Residues 10–30 (LLTITIGAVAVSSILLGGIFY) form a helical membrane-spanning segment. Residues 57-76 (LDYQKARPSIKDSNLKEIPK) show a composition bias toward basic and acidic residues. Residues 57–171 (LDYQKARPSI…PQPQQVPNNS (115 aa)) are disordered. Over residues 77 to 97 (PKPQPKPKPQPTPFPDPIPTP) the composition is skewed to pro residues. The span at 98 to 124 (PKKEELKKPDIKPEEPKKPEIKPEPKP) shows a compositional bias: basic and acidic residues. Positions 125-135 (EPIPQPAPPIE) are enriched in pro residues.

This sequence to U.parvum UU046.

Its subcellular location is the membrane. This is an uncharacterized protein from Ureaplasma parvum serovar 3 (strain ATCC 700970).